Here is a 491-residue protein sequence, read N- to C-terminus: Argininosuccinate lyase (491 aa).

This sequence belongs to the lyase 1 family. Argininosuccinate lyase subfamily.

Its subcellular location is the cytoplasm. It catalyses the reaction 2-(N(omega)-L-arginino)succinate = fumarate + L-arginine. It participates in amino-acid biosynthesis; L-arginine biosynthesis; L-arginine from L-ornithine and carbamoyl phosphate: step 3/3. In Methanosarcina barkeri (strain Fusaro / DSM 804), this protein is Argininosuccinate lyase.